The sequence spans 196 residues: Pyridoxal 5'-phosphate synthase subunit PdxT (196 aa).

52–54 contacts L-glutamine; it reads GES. The active-site Nucleophile is cysteine 84. Residues arginine 113 and 141–142 each bind L-glutamine; that span reads IR. Catalysis depends on charge relay system residues histidine 178 and glutamate 180.

It belongs to the glutaminase PdxT/SNO family. As to quaternary structure, in the presence of PdxS, forms a dodecamer of heterodimers. Only shows activity in the heterodimer.

It carries out the reaction aldehydo-D-ribose 5-phosphate + D-glyceraldehyde 3-phosphate + L-glutamine = pyridoxal 5'-phosphate + L-glutamate + phosphate + 3 H2O + H(+). The catalysed reaction is L-glutamine + H2O = L-glutamate + NH4(+). It functions in the pathway cofactor biosynthesis; pyridoxal 5'-phosphate biosynthesis. In terms of biological role, catalyzes the hydrolysis of glutamine to glutamate and ammonia as part of the biosynthesis of pyridoxal 5'-phosphate. The resulting ammonia molecule is channeled to the active site of PdxS. The protein is Pyridoxal 5'-phosphate synthase subunit PdxT of Pyrococcus abyssi (strain GE5 / Orsay).